Reading from the N-terminus, the 115-residue chain is Phosphoribosyl-AMP cyclohydrolase (115 aa).

Asp80 is a binding site for Mg(2+). Cys81 serves as a coordination point for Zn(2+). 2 residues coordinate Mg(2+): Asp82 and Asp84. Zn(2+) contacts are provided by Cys97 and Cys104.

It belongs to the PRA-CH family. In terms of assembly, homodimer. Mg(2+) is required as a cofactor. Zn(2+) serves as cofactor.

The protein resides in the cytoplasm. It carries out the reaction 1-(5-phospho-beta-D-ribosyl)-5'-AMP + H2O = 1-(5-phospho-beta-D-ribosyl)-5-[(5-phospho-beta-D-ribosylamino)methylideneamino]imidazole-4-carboxamide. It functions in the pathway amino-acid biosynthesis; L-histidine biosynthesis; L-histidine from 5-phospho-alpha-D-ribose 1-diphosphate: step 3/9. Catalyzes the hydrolysis of the adenine ring of phosphoribosyl-AMP. This Mycobacterium sp. (strain MCS) protein is Phosphoribosyl-AMP cyclohydrolase.